We begin with the raw amino-acid sequence, 1069 residues long: Carbamoyl phosphate synthase large chain (1069 aa).

Positions methionine 1–glutamate 401 are carboxyphosphate synthetic domain. Positions 129, 169, 175, 176, 208, 210, 215, 241, 242, 243, 284, and 298 each coordinate ATP. The ATP-grasp 1 domain occupies arginine 133–leucine 327. The Mg(2+) site is built by glutamine 284, glutamate 298, and asparagine 300. Mn(2+)-binding residues include glutamine 284, glutamate 298, and asparagine 300. The oligomerization domain stretch occupies residues isoleucine 402–valine 549. A carbamoyl phosphate synthetic domain region spans residues glutamate 550 to asparagine 932. In terms of domain architecture, ATP-grasp 2 spans aspartate 674–methionine 864. ATP-binding residues include arginine 710, lysine 749, leucine 751, glutamate 755, glycine 780, valine 781, histidine 782, serine 783, glutamine 823, and glutamate 835. Mg(2+)-binding residues include glutamine 823, glutamate 835, and asparagine 837. Residues glutamine 823, glutamate 835, and asparagine 837 each coordinate Mn(2+). Residues asparagine 932 to lysine 1069 enclose the MGS-like domain. Residues methionine 933 to lysine 1069 form an allosteric domain region.

It belongs to the CarB family. In terms of assembly, composed of two chains; the small (or glutamine) chain promotes the hydrolysis of glutamine to ammonia, which is used by the large (or ammonia) chain to synthesize carbamoyl phosphate. Tetramer of heterodimers (alpha,beta)4. It depends on Mg(2+) as a cofactor. The cofactor is Mn(2+).

The catalysed reaction is hydrogencarbonate + L-glutamine + 2 ATP + H2O = carbamoyl phosphate + L-glutamate + 2 ADP + phosphate + 2 H(+). It catalyses the reaction hydrogencarbonate + NH4(+) + 2 ATP = carbamoyl phosphate + 2 ADP + phosphate + 2 H(+). The protein operates within amino-acid biosynthesis; L-arginine biosynthesis; carbamoyl phosphate from bicarbonate: step 1/1. It functions in the pathway pyrimidine metabolism; UMP biosynthesis via de novo pathway; (S)-dihydroorotate from bicarbonate: step 1/3. Large subunit of the glutamine-dependent carbamoyl phosphate synthetase (CPSase). CPSase catalyzes the formation of carbamoyl phosphate from the ammonia moiety of glutamine, carbonate, and phosphate donated by ATP, constituting the first step of 2 biosynthetic pathways, one leading to arginine and/or urea and the other to pyrimidine nucleotides. The large subunit (synthetase) binds the substrates ammonia (free or transferred from glutamine from the small subunit), hydrogencarbonate and ATP and carries out an ATP-coupled ligase reaction, activating hydrogencarbonate by forming carboxy phosphate which reacts with ammonia to form carbamoyl phosphate. The sequence is that of Carbamoyl phosphate synthase large chain from Clostridium botulinum (strain Eklund 17B / Type B).